The primary structure comprises 143 residues: Transcription antitermination protein NusB (143 aa).

Belongs to the NusB family.

Involved in transcription antitermination. Required for transcription of ribosomal RNA (rRNA) genes. Binds specifically to the boxA antiterminator sequence of the ribosomal RNA (rrn) operons. The sequence is that of Transcription antitermination protein NusB from Dehalococcoides mccartyi (strain CBDB1).